Here is a 277-residue protein sequence, read N- to C-terminus: MKRPVDFFAMKENGEKITMITAYDYPSAKNVEQAEADMILVGDSLGMVVLGYDSTVPVTIDDMIHHTKAVKRGATDTFIVTDMPFMTYHGSVNETIQNARKIIQESGAHAVKLEGAGEVVNKIARLTEAGAPVVAHLGLTPQSVGLTGSYKVRAKSAQEAQELMDNALAVEAAGAIAIVLEAIPRQLAEKVSKALSIPTIGIGAGLETDGQVLVYHDIIGYGISRRAKFVKAYADIDETIEPALASYVKEVKAETFPEVKHSFTMAEEDLKGLYGRE.

2 residues coordinate Mg(2+): aspartate 43 and aspartate 82. Residues 43–44 (DS), aspartate 82, and lysine 112 each bind 3-methyl-2-oxobutanoate. Residue glutamate 114 participates in Mg(2+) binding. The Proton acceptor role is filled by glutamate 181.

It belongs to the PanB family. As to quaternary structure, homodecamer; pentamer of dimers. Requires Mg(2+) as cofactor.

Its subcellular location is the cytoplasm. It catalyses the reaction 3-methyl-2-oxobutanoate + (6R)-5,10-methylene-5,6,7,8-tetrahydrofolate + H2O = 2-dehydropantoate + (6S)-5,6,7,8-tetrahydrofolate. It functions in the pathway cofactor biosynthesis; (R)-pantothenate biosynthesis; (R)-pantoate from 3-methyl-2-oxobutanoate: step 1/2. Catalyzes the reversible reaction in which hydroxymethyl group from 5,10-methylenetetrahydrofolate is transferred onto alpha-ketoisovalerate to form ketopantoate. In Listeria monocytogenes serovar 1/2a (strain ATCC BAA-679 / EGD-e), this protein is 3-methyl-2-oxobutanoate hydroxymethyltransferase.